The following is a 118-amino-acid chain: Small ribosomal subunit protein uS13 (118 aa).

Positions 94–118 (GLPVRGQRTKTNARTRKGPRKPIKK) are disordered.

Belongs to the universal ribosomal protein uS13 family. Part of the 30S ribosomal subunit. Forms a loose heterodimer with protein S19. Forms two bridges to the 50S subunit in the 70S ribosome.

Functionally, located at the top of the head of the 30S subunit, it contacts several helices of the 16S rRNA. In the 70S ribosome it contacts the 23S rRNA (bridge B1a) and protein L5 of the 50S subunit (bridge B1b), connecting the 2 subunits; these bridges are implicated in subunit movement. Contacts the tRNAs in the A and P-sites. The sequence is that of Small ribosomal subunit protein uS13 from Salmonella paratyphi A (strain ATCC 9150 / SARB42).